A 319-amino-acid chain; its full sequence is Formimidoylglutamase (319 aa).

Positions 127, 150, 152, 154, 242, and 244 each coordinate Mn(2+).

It belongs to the arginase family. Mn(2+) is required as a cofactor.

The enzyme catalyses N-formimidoyl-L-glutamate + H2O = formamide + L-glutamate. Its pathway is amino-acid degradation; L-histidine degradation into L-glutamate; L-glutamate from N-formimidoyl-L-glutamate (hydrolase route): step 1/1. Functionally, catalyzes the conversion of N-formimidoyl-L-glutamate to L-glutamate and formamide. The protein is Formimidoylglutamase of Halalkalibacterium halodurans (strain ATCC BAA-125 / DSM 18197 / FERM 7344 / JCM 9153 / C-125) (Bacillus halodurans).